A 109-amino-acid chain; its full sequence is Nucleoid-associated protein Spro_1136 (109 aa).

2 disordered regions span residues 1–21 (MFGKGGLGNLMKQAQQMQEKM) and 90–109 (EKMASVSNGMQLPPGFKMPF). Residues 11–21 (MKQAQQMQEKM) are compositionally biased toward low complexity.

The protein belongs to the YbaB/EbfC family. In terms of assembly, homodimer.

It localises to the cytoplasm. The protein resides in the nucleoid. Functionally, binds to DNA and alters its conformation. May be involved in regulation of gene expression, nucleoid organization and DNA protection. This Serratia proteamaculans (strain 568) protein is Nucleoid-associated protein Spro_1136.